The following is a 265-amino-acid chain: DNA-binding dual transcriptional regulator Rns (265 aa).

The decanoate site is built by His20 and Arg75. The 98-residue stretch at 164–261 folds into the HTH araC/xylS-type domain; it reads DKVRNLIEKD…GVTPKQFFTY (98 aa). 2 DNA-binding regions (H-T-H motif) span residues 181–202 and 228–251; these read GIIA…ESEN and ISQI…NKHY.

Homodimer; each subunit binds one decanoate molecule.

The protein resides in the cytoplasm. Its activity is regulated as follows. Rns-dependent expression of pilins and outer membrane proteins CexE-alpha and CexE-epsilon are inhibited in vivo by decanoic acid (decanoate); has no effect on expression of DnaK or flagellins. Decanoate relieves Rns-dependent repression of nlpA. A transcription factor required for the expression of the CS1 and CS2 adhesins of enterotoxigenic E.coli. Required for expression of pilins and some outer membrane lipoproteins. Represses expression of nlpA. The chain is DNA-binding dual transcriptional regulator Rns from Escherichia coli.